The chain runs to 147 residues: Large ribosomal subunit protein uL16 (147 aa).

It belongs to the universal ribosomal protein uL16 family. As to quaternary structure, part of the 50S ribosomal subunit.

Functionally, binds 23S rRNA and is also seen to make contacts with the A and possibly P site tRNAs. The sequence is that of Large ribosomal subunit protein uL16 from Caldicellulosiruptor saccharolyticus (strain ATCC 43494 / DSM 8903 / Tp8T 6331).